We begin with the raw amino-acid sequence, 1079 residues long: DNA ligase 4 (1079 aa).

Residues 1-20 (MAVHAPYNHAPPPTQEINGQ) are disordered. ATP contacts are provided by E295, K297, L298, R302, E357, F395, E460, K465, K482, and K484. K297 acts as the N6-AMP-lysine intermediate in catalysis. A Mg(2+)-binding site is contributed by E357. Residue E460 coordinates Mg(2+). One can recognise a BRCT 1 domain in the interval 699–789 (VETSIFSDMT…TALPFLKEFL (91 aa)). Residues 838–847 (DGEDKDEIDV) show a composition bias toward acidic residues. Residues 838-942 (DGEDKDEIDV…SDVGVNGDDY (105 aa)) are disordered. Composition is skewed to basic and acidic residues over residues 848-878 (EESR…KKLQ) and 900-914 (MSLK…ERSR). Residues 968–1078 (DEDRIFYHLA…TLLDEDLYKP (111 aa)) form the BRCT 2 domain.

This sequence belongs to the ATP-dependent DNA ligase family. Mg(2+) serves as cofactor.

It localises to the nucleus. It carries out the reaction ATP + (deoxyribonucleotide)n-3'-hydroxyl + 5'-phospho-(deoxyribonucleotide)m = (deoxyribonucleotide)n+m + AMP + diphosphate.. DNA ligase involved in DNA non-homologous end joining (NHEJ); required for double-strand break (DSB) repair. This Cryptococcus neoformans var. neoformans serotype D (strain JEC21 / ATCC MYA-565) (Filobasidiella neoformans) protein is DNA ligase 4 (LIG4).